The following is a 338-amino-acid chain: High mobility group B protein 9 (338 aa).

Residues 38-129 (VKDSSVFWDT…LLFHYEQVHL (92 aa)) enclose the ARID domain. Residues 233–259 (TGRRRRRLGKRRRSRRREDPNYPKPNR) form a disordered region. The segment covering 235–247 (RRRRRLGKRRRSR) has biased composition (basic residues). The segment at residues 255-322 (PKPNRSGYNF…RYQRELNEYR (68 aa)) is a DNA-binding region (HMG box).

As to expression, predominantly expressed in leaves, flowers and seedlings.

The protein localises to the nucleus. Binds preferentially DNA with A/T-rich content. Required for karyogamy during female gametophyte development, when the two polar nuclei fuse to form the diploid central cell nucleus. In Arabidopsis thaliana (Mouse-ear cress), this protein is High mobility group B protein 9 (HMGB9).